A 121-amino-acid chain; its full sequence is Ribosome-binding factor A (121 aa).

The protein belongs to the RbfA family. In terms of assembly, monomer. Binds 30S ribosomal subunits, but not 50S ribosomal subunits or 70S ribosomes.

It localises to the cytoplasm. Functionally, one of several proteins that assist in the late maturation steps of the functional core of the 30S ribosomal subunit. Associates with free 30S ribosomal subunits (but not with 30S subunits that are part of 70S ribosomes or polysomes). Required for efficient processing of 16S rRNA. May interact with the 5'-terminal helix region of 16S rRNA. The protein is Ribosome-binding factor A of Finegoldia magna (strain ATCC 29328 / DSM 20472 / WAL 2508) (Peptostreptococcus magnus).